A 122-amino-acid polypeptide reads, in one-letter code: Large ribosomal subunit protein uL14c (122 aa).

This sequence belongs to the universal ribosomal protein uL14 family. As to quaternary structure, part of the 50S ribosomal subunit.

It is found in the plastid. The protein localises to the chloroplast. Its function is as follows. Binds to 23S rRNA. This is Large ribosomal subunit protein uL14c from Guizotia abyssinica (Niger).